Reading from the N-terminus, the 443-residue chain is Xaa-Pro dipeptidase (443 aa).

Asp-246, Asp-257, His-339, Glu-384, and Glu-423 together coordinate Mn(2+).

The protein belongs to the peptidase M24B family. Bacterial-type prolidase subfamily. Mn(2+) is required as a cofactor.

It catalyses the reaction Xaa-L-Pro dipeptide + H2O = an L-alpha-amino acid + L-proline. Its function is as follows. Splits dipeptides with a prolyl residue in the C-terminal position. The protein is Xaa-Pro dipeptidase of Pectobacterium carotovorum subsp. carotovorum (strain PC1).